The primary structure comprises 444 residues: Pineal opsin (444 aa).

The segment at 1–20 (MDALQESPPSHHSLPSALPS) is disordered. Residues 1-46 (MDALQESPPSHHSLPSALPSATGGNGTVATMHNPFERPLEGIAPWN) lie on the Extracellular side of the membrane. A compositionally biased stretch (low complexity) spans 7 to 20 (SPPSHHSLPSALPS). An N-linked (GlcNAc...) asparagine glycan is attached at asparagine 25. The helical transmembrane segment at 47 to 71 (FTMLAALMGTITALSLGENFAVIVV) threads the bilayer. The Cytoplasmic segment spans residues 72-83 (TARFRQLRQPLN). Residues 84-108 (YVLVNLAAADLLVSAIGGSVSFFTN) form a helical membrane-spanning segment. The Extracellular segment spans residues 109-123 (IKGYFFLGVHACVLE). Cysteines 120 and 197 form a disulfide. The helical transmembrane segment at 124–143 (GFAVTYFGVVALWSLALLAF) threads the bilayer. Residues 144 to 162 (ERYFVICRPLGNFRLQSKH) lie on the Cytoplasmic side of the membrane. A helical transmembrane segment spans residues 163 to 186 (AVLGLAVVWVFSLACTLPPVLGWS). At 187–210 (SYRPSMIGTTCEPNWYSGELHDHT) the chain is on the extracellular side. A helical membrane pass occupies residues 211 to 238 (FILMFFSTCFIFPLAVIFFSYGKLIQKL). The Cytoplasmic portion of the chain corresponds to 239 to 260 (KKASETQRGLESTRRAEQQVTR). Residues 261–284 (MVVVMILAFLVCWMPYATFSIVVT) form a helical membrane-spanning segment. The Extracellular portion of the chain corresponds to 285–292 (ACPTIHLD). Residues 293–317 (PLLAAVPAFFSKTATVYNPVIYIFM) traverse the membrane as a helical segment. Position 304 is an N6-(retinylidene)lysine (lysine 304). The Cytoplasmic portion of the chain corresponds to 318-444 (NKQFRDCFVQ…SESVSKICPV (127 aa)). The S-palmitoyl cysteine moiety is linked to residue cysteine 331. 2 disordered regions span residues 341–360 (QTAG…QSPG) and 388–420 (EPTM…QQGT). Residues 409 to 419 (QQQGQQQQQQG) are compositionally biased toward low complexity.

This sequence belongs to the G-protein coupled receptor 1 family. Opsin subfamily. Post-translationally, phosphorylated on some or all of the serine and threonine residues present in the C-terminal region. Pineal gland.

The protein resides in the membrane. This is Pineal opsin from Petromyzon marinus (Sea lamprey).